Here is a 321-residue protein sequence, read N- to C-terminus: Electron transfer flavoprotein subunit alpha (321 aa).

Positions 211, 236, 237, 250, 251, 254, 255, 270, 272, 274, 275, 289, 307, and 308 each coordinate FAD.

As to quaternary structure, heterodimer of an alpha and a beta subunit. Forms a ternary complex with trimethylamine dehydrogenase. The cofactor is FAD.

In terms of biological role, heterodimeric electron transfer flavoprotein that accepts electrons from trimethylamine dehydrogenase. It transfers the electrons to the main respiratory chain via ETF-ubiquinone oxidoreductase (ETF dehydrogenase). The polypeptide is Electron transfer flavoprotein subunit alpha (etfA) (Methylophilus methylotrophus (Bacterium W3A1)).